A 133-amino-acid polypeptide reads, in one-letter code: Secretin (133 aa).

An N-terminal signal peptide occupies residues 1-22 (MEPPLPTPMLLLLLLLLSSSAA). Residues 23 to 30 (LPAPPRTP) constitute a propeptide that is removed on maturation. Val58 carries the valine amide modification. Ser62 carries the post-translational modification Phosphoserine. A propeptide spanning residues 62–133 (SEQDTENIPE…EWTETTRPPR (72 aa)) is cleaved from the precursor.

This sequence belongs to the glucagon family. Highly expressed in the intestine. Also expressed in the hippocampus, cerebellum and the brain stem in adult mouse brain. In the hippocampus, expressed in the dentate gyrus, the hilus and the molecular layer.

The protein resides in the secreted. Hormone involved in different processes, such as regulation of the pH of the duodenal content, food intake and water homeostasis. Exerts its biological effects by binding to secretin receptor (SCTR), a G-protein coupled receptor expressed in the basolateral domain of several cells. Acts as a key gastrointestinal hormone by regulating the pH of the duodenal content. Secreted by S cells of the duodenum in the crypts of Lieberkuehn and regulates the pH of the duodenum by (1) inhibiting the secretion of gastric acid from the parietal cells of the stomach and (2) stimulating the production of bicarbonate (NaHCO(3)) from the ductal cells of the pancreas. Production of bicarbonate is essential to neutralize the pH and ensure no damage is done to the small intestine by the gastric acid. In addition to regulating the pH of the duodenal content, plays a central role in diet induced thermogenesis: acts as a non-sympathetic brown fat (BAT) activator mediating prandial thermogenesis, which consequentially induces satiation. Mechanistically, secretin released by the gut after a meal binds to secretin receptor (SCTR) in brown adipocytes, activating brown fat thermogenesis by stimulating lipolysis, which is sensed in the brain and promotes satiation. Also able to stimulate lipolysis in white adipocytes. Also plays an important role in cellular osmoregulation: released into the systemic circulation in response to hyperosmolality and acts at different levels in the hypothalamus, pituitary and kidney to regulate water homeostasis. Also plays a role in the central nervous system, possibly by acting as a neuropeptide hormone: required for hippocampal synaptic function and neural progenitor cells maintenance. In Mus musculus (Mouse), this protein is Secretin.